We begin with the raw amino-acid sequence, 232 residues long: Phosphatidylserine decarboxylase proenzyme (232 aa).

The active-site Schiff-base intermediate with substrate; via pyruvic acid is Ser-190. Ser-190 is modified (pyruvic acid (Ser); by autocatalysis).

It belongs to the phosphatidylserine decarboxylase family. PSD-A subfamily. As to quaternary structure, heterodimer of a large membrane-associated beta subunit and a small pyruvoyl-containing alpha subunit. Pyruvate is required as a cofactor. Is synthesized initially as an inactive proenzyme. Formation of the active enzyme involves a self-maturation process in which the active site pyruvoyl group is generated from an internal serine residue via an autocatalytic post-translational modification. Two non-identical subunits are generated from the proenzyme in this reaction, and the pyruvate is formed at the N-terminus of the alpha chain, which is derived from the carboxyl end of the proenzyme. The post-translation cleavage follows an unusual pathway, termed non-hydrolytic serinolysis, in which the side chain hydroxyl group of the serine supplies its oxygen atom to form the C-terminus of the beta chain, while the remainder of the serine residue undergoes an oxidative deamination to produce ammonia and the pyruvoyl prosthetic group on the alpha chain.

The protein localises to the cell membrane. The catalysed reaction is a 1,2-diacyl-sn-glycero-3-phospho-L-serine + H(+) = a 1,2-diacyl-sn-glycero-3-phosphoethanolamine + CO2. It participates in phospholipid metabolism; phosphatidylethanolamine biosynthesis; phosphatidylethanolamine from CDP-diacylglycerol: step 2/2. Catalyzes the formation of phosphatidylethanolamine (PtdEtn) from phosphatidylserine (PtdSer). The polypeptide is Phosphatidylserine decarboxylase proenzyme (Rhodopseudomonas palustris (strain ATCC BAA-98 / CGA009)).